We begin with the raw amino-acid sequence, 291 residues long: Ecto-ADP-ribosyltransferase 5 (291 aa).

Positions 1–22 (MALAALMIALGSLGLHTWQAQA) are cleaved as a signal peptide. Residues Cys-42 and Cys-258 are joined by a disulfide bond. Residues 62-252 (ALLRESWEAA…LVTLWSYNQT (191 aa)) form the TR mART core domain. Tyr-99 is a binding site for NAD(+). The N-linked (GlcNAc...) asparagine glycan is linked to Asn-101. Residues Arg-160 and Gln-180 each contribute to the NAD(+) site. Arg-160 is a catalytic residue. Ser-183 is an active-site residue. N-linked (GlcNAc...) asparagine glycosylation is present at Asn-196. Ser-214 is a binding site for NAD(+). The active site involves Glu-221. A glycan (N-linked (GlcNAc...) asparagine) is linked at Asn-250.

The protein belongs to the Arg-specific ADP-ribosyltransferase family.

The protein localises to the secreted. The enzyme catalyses L-arginyl-[protein] + NAD(+) = N(omega)-(ADP-D-ribosyl)-L-arginyl-[protein] + nicotinamide + H(+). This is Ecto-ADP-ribosyltransferase 5 (ART5) from Homo sapiens (Human).